The primary structure comprises 296 residues: ATP synthase gamma chain (296 aa).

It belongs to the ATPase gamma chain family. As to quaternary structure, F-type ATPases have 2 components, CF(1) - the catalytic core - and CF(0) - the membrane proton channel. CF(1) has five subunits: alpha(3), beta(3), gamma(1), delta(1), epsilon(1). CF(0) has three main subunits: a, b and c.

It is found in the cell inner membrane. Produces ATP from ADP in the presence of a proton gradient across the membrane. The gamma chain is believed to be important in regulating ATPase activity and the flow of protons through the CF(0) complex. The chain is ATP synthase gamma chain from Rhodopirellula baltica (strain DSM 10527 / NCIMB 13988 / SH1).